The following is a 494-amino-acid chain: Cobyric acid synthase (494 aa).

The 197-residue stretch at 248 to 444 (EIEIAIIKLP…LHGIFENDEW (197 aa)) folds into the GATase cobBQ-type domain. Cys329 (nucleophile) is an active-site residue. The active site involves His436.

The protein belongs to the CobB/CobQ family. CobQ subfamily.

The protein operates within cofactor biosynthesis; adenosylcobalamin biosynthesis. Functionally, catalyzes amidations at positions B, D, E, and G on adenosylcobyrinic A,C-diamide. NH(2) groups are provided by glutamine, and one molecule of ATP is hydrogenolyzed for each amidation. The protein is Cobyric acid synthase of Prochlorococcus marinus (strain NATL1A).